Reading from the N-terminus, the 815-residue chain is Protein-glutamine gamma-glutamyltransferase K (815 aa).

Positions Met-1–Arg-10 are enriched in basic and acidic residues. Disordered stretches follow at residues Met-1–Ala-48 and Asp-62–Asp-101. Over residues Trp-16 to Glu-25 the composition is skewed to pro residues. Position 21 is a phosphothreonine (Thr-21). Phosphoserine is present on residues Ser-23, Ser-71, Ser-83, Ser-91, and Ser-94. Residues Pro-66 to Ser-78 show a composition bias toward low complexity. Positions Arg-79–Ser-91 are enriched in basic and acidic residues. Residues Cys-376, His-435, and Asp-458 contribute to the active site. Residues Asn-498, Asp-500, Glu-547, and Glu-552 each contribute to the Ca(2+) site. A disordered region spans residues Gly-791 to Ala-815. At Ser-803 the chain carries Phosphoserine.

Belongs to the transglutaminase superfamily. Transglutaminase family. As to quaternary structure, interacts with PLAAT4. Requires Ca(2+) as cofactor. In terms of processing, tyrosine-phosphorylated. Post-translationally, palmitoylated. The membrane anchorage region possesses a cluster of five cysteines within which fatty acid(s) may become thioester-linked. It is subject to phorbol ester-stimulated phosphorylation and is hypersensitive to proteolysis, which releases the enzyme in a soluble form. In terms of tissue distribution, expressed in large amounts in epithelial tissues (lung, liver and kidney).

It is found in the membrane. It carries out the reaction L-glutaminyl-[protein] + L-lysyl-[protein] = [protein]-L-lysyl-N(6)-5-L-glutamyl-[protein] + NH4(+). Catalyzes the cross-linking of proteins and the conjugation of polyamines to proteins. Responsible for cross-linking epidermal proteins during formation of the stratum corneum. Involved in cell proliferation. This is Protein-glutamine gamma-glutamyltransferase K (Tgm1) from Mus musculus (Mouse).